Reading from the N-terminus, the 339-residue chain is Phenylalanine--tRNA ligase alpha subunit (339 aa).

Mg(2+) is bound at residue Glu253.

Belongs to the class-II aminoacyl-tRNA synthetase family. Phe-tRNA synthetase alpha subunit type 1 subfamily. As to quaternary structure, tetramer of two alpha and two beta subunits. It depends on Mg(2+) as a cofactor.

It is found in the cytoplasm. The catalysed reaction is tRNA(Phe) + L-phenylalanine + ATP = L-phenylalanyl-tRNA(Phe) + AMP + diphosphate + H(+). The protein is Phenylalanine--tRNA ligase alpha subunit of Alcanivorax borkumensis (strain ATCC 700651 / DSM 11573 / NCIMB 13689 / SK2).